Reading from the N-terminus, the 248-residue chain is 2,3-bisphosphoglycerate-dependent phosphoglycerate mutase (248 aa).

Substrate contacts are provided by residues 8 to 15 (RHGESTWN), 21 to 22 (TG), Arg-60, 87 to 90 (ERHY), Lys-98, 114 to 115 (RR), and 183 to 184 (GN). Residue His-9 is the Tele-phosphohistidine intermediate of the active site. The Proton donor/acceptor role is filled by Glu-87.

The protein belongs to the phosphoglycerate mutase family. BPG-dependent PGAM subfamily. As to quaternary structure, homodimer.

It carries out the reaction (2R)-2-phosphoglycerate = (2R)-3-phosphoglycerate. The protein operates within carbohydrate degradation; glycolysis; pyruvate from D-glyceraldehyde 3-phosphate: step 3/5. Functionally, catalyzes the interconversion of 2-phosphoglycerate and 3-phosphoglycerate. This Ralstonia nicotianae (strain ATCC BAA-1114 / GMI1000) (Ralstonia solanacearum) protein is 2,3-bisphosphoglycerate-dependent phosphoglycerate mutase.